The chain runs to 400 residues: Aspartate/prephenate aminotransferase (400 aa).

Glycine 39, tryptophan 125, and asparagine 175 together coordinate L-aspartate. At lysine 239 the chain carries N6-(pyridoxal phosphate)lysine. Arginine 375 is a binding site for L-aspartate.

Belongs to the class-I pyridoxal-phosphate-dependent aminotransferase family. In terms of assembly, homodimer. Pyridoxal 5'-phosphate serves as cofactor.

It localises to the cytoplasm. It catalyses the reaction L-aspartate + 2-oxoglutarate = oxaloacetate + L-glutamate. The catalysed reaction is L-arogenate + 2-oxoglutarate = prephenate + L-glutamate. Its function is as follows. Catalyzes the reversible conversion of aspartate and 2-oxoglutarate to glutamate and oxaloacetate. Can also transaminate prephenate in the presence of glutamate. The sequence is that of Aspartate/prephenate aminotransferase from Cereibacter sphaeroides (strain ATCC 17029 / ATH 2.4.9) (Rhodobacter sphaeroides).